Reading from the N-terminus, the 360-residue chain is Lipid-A-disaccharide synthase (360 aa).

This sequence belongs to the LpxB family.

The enzyme catalyses a lipid X + a UDP-2-N,3-O-bis[(3R)-3-hydroxyacyl]-alpha-D-glucosamine = a lipid A disaccharide + UDP + H(+). It participates in bacterial outer membrane biogenesis; LPS lipid A biosynthesis. Its function is as follows. Condensation of UDP-2,3-diacylglucosamine and 2,3-diacylglucosamine-1-phosphate to form lipid A disaccharide, a precursor of lipid A, a phosphorylated glycolipid that anchors the lipopolysaccharide to the outer membrane of the cell. The protein is Lipid-A-disaccharide synthase of Helicobacter acinonychis (strain Sheeba).